The sequence spans 197 residues: Adenylate kinase (197 aa).

19-24 (GSGKGT) contacts ATP. Positions 39-68 (SSGDLLRAEVQSGSPKGKELKAMMERGELV) are NMP. AMP is bound by residues S40, R45, 66–68 (ELV), 95–98 (RYPR), and Q102. An LID region spans residues 132–142 (KRAETSNRVDD). Position 133 (R133) interacts with ATP. Positions 139 and 150 each coordinate AMP. Residue G178 participates in ATP binding.

This sequence belongs to the adenylate kinase family. Monomer.

It is found in the cytoplasm. The catalysed reaction is AMP + ATP = 2 ADP. Catalyzes the reversible transfer of the terminal phosphate group between ATP and AMP. Plays an important role in cellular energy homeostasis and in adenine nucleotide metabolism. The sequence is that of Adenylate kinase from Schistosoma mansoni (Blood fluke).